The chain runs to 147 residues: uncharacterized protein (147 aa).

A run of 2 helical transmembrane segments spans residues 42–62 (WASLICLGLLCVMIMIKSPEP) and 64–84 (LILQEILSHTFYLFWMLATAF).

Its subcellular location is the cell membrane. This is an uncharacterized protein from Bacillus subtilis (strain 168).